The primary structure comprises 109 residues: MKRFPLFLLFTLLTLSTVPAQADIIDDTIGNIQQAINDAYNPDRGRDYEDSRDDGWQREVSDDRRRQYDDRRRQFEDRRRQLDDRQRQLDQERRQLEDEERRMEDEYGR.

A signal peptide spans 1-22; that stretch reads MKRFPLFLLFTLLTLSTVPAQA. A disordered region spans residues 39–109; the sequence is AYNPDRGRDY…ERRMEDEYGR (71 aa). The span at 41–109 shows a compositional bias: basic and acidic residues; that stretch reads NPDRGRDYED…ERRMEDEYGR (69 aa).

This is an uncharacterized protein from Escherichia coli O6:H1 (strain CFT073 / ATCC 700928 / UPEC).